A 353-amino-acid polypeptide reads, in one-letter code: Histidinol-phosphate aminotransferase 1 (353 aa).

Lys-211 carries the N6-(pyridoxal phosphate)lysine modification.

It belongs to the class-II pyridoxal-phosphate-dependent aminotransferase family. Histidinol-phosphate aminotransferase subfamily. In terms of assembly, homodimer. The cofactor is pyridoxal 5'-phosphate.

The catalysed reaction is L-histidinol phosphate + 2-oxoglutarate = 3-(imidazol-4-yl)-2-oxopropyl phosphate + L-glutamate. It participates in amino-acid biosynthesis; L-histidine biosynthesis; L-histidine from 5-phospho-alpha-D-ribose 1-diphosphate: step 7/9. This Nostoc sp. (strain PCC 7120 / SAG 25.82 / UTEX 2576) protein is Histidinol-phosphate aminotransferase 1 (hisC1).